The chain runs to 201 residues: Recombination protein RecR (201 aa).

The C4-type zinc-finger motif lies at 57-72; that stretch reads CKYCSNFGNKDECDIC. The region spanning 80–176 is the Toprim domain; it reads TKLMIVTTNE…QIYRIGFGIP (97 aa).

The protein belongs to the RecR family.

In terms of biological role, may play a role in DNA repair. It seems to be involved in an RecBC-independent recombinational process of DNA repair. It may act with RecF and RecO. This Ureaplasma urealyticum serovar 10 (strain ATCC 33699 / Western) protein is Recombination protein RecR.